Here is a 414-residue protein sequence, read N- to C-terminus: Methyltransferase-like protein 2 (414 aa).

The tract at residues 56–77 (LNQHSSESNPKKRKRKQKNSSF) is disordered.

It belongs to the MT-A70-like family.

Functionally, probable methyltransferase. This chain is Methyltransferase-like protein 2, found in Arabidopsis thaliana (Mouse-ear cress).